The sequence spans 192 residues: UPF0312 protein PC1_2518 (192 aa).

The first 23 residues, M1–A23, serve as a signal peptide directing secretion.

Belongs to the UPF0312 family. Type 1 subfamily.

It is found in the periplasm. This chain is UPF0312 protein PC1_2518, found in Pectobacterium carotovorum subsp. carotovorum (strain PC1).